The following is a 519-amino-acid chain: Chaperone SurA (519 aa).

Positions 1 to 31 (MMRSLHSLRRMSGTVLALMLAAGLPLSAAQA) are cleaved as a signal peptide. 2 stretches are compositionally biased toward low complexity: residues 31–45 (AQPAKPAPKGDQKPA) and 197–207 (PAAAQATRAPA). 2 disordered regions span residues 31–50 (AQPAKPAPKGDQKPATPAPS) and 196–221 (NPAAAQATRAPAPQQPQPQPRQPAQS). Positions 223-324 (PAMLVLAQIL…NGFHILKVVD (102 aa)) constitute a PpiC 1 domain. Residues 328-361 (GGQPAQAARPAPAPAPQQPSSFQEGPSVAAPQGP) are disordered. One can recognise a PpiC 2 domain in the interval 364–463 (VTQTHARHIL…FGWHLIQVLE (100 aa)).

It localises to the periplasm. It carries out the reaction [protein]-peptidylproline (omega=180) = [protein]-peptidylproline (omega=0). Its function is as follows. Chaperone involved in the correct folding and assembly of outer membrane proteins. Recognizes specific patterns of aromatic residues and the orientation of their side chains, which are found more frequently in integral outer membrane proteins. May act in both early periplasmic and late outer membrane-associated steps of protein maturation. The protein is Chaperone SurA of Bordetella pertussis (strain Tohama I / ATCC BAA-589 / NCTC 13251).